A 207-amino-acid polypeptide reads, in one-letter code: ATP-dependent Clp protease proteolytic subunit 1 (207 aa).

Residue Ser103 is the Nucleophile of the active site. The active site involves His128.

This sequence belongs to the peptidase S14 family. Fourteen ClpP subunits assemble into 2 heptameric rings which stack back to back to give a disk-like structure with a central cavity, resembling the structure of eukaryotic proteasomes.

The protein localises to the cytoplasm. The enzyme catalyses Hydrolysis of proteins to small peptides in the presence of ATP and magnesium. alpha-casein is the usual test substrate. In the absence of ATP, only oligopeptides shorter than five residues are hydrolyzed (such as succinyl-Leu-Tyr-|-NHMec, and Leu-Tyr-Leu-|-Tyr-Trp, in which cleavage of the -Tyr-|-Leu- and -Tyr-|-Trp bonds also occurs).. Cleaves peptides in various proteins in a process that requires ATP hydrolysis. Has a chymotrypsin-like activity. Plays a major role in the degradation of misfolded proteins. This Synechococcus sp. (strain CC9605) protein is ATP-dependent Clp protease proteolytic subunit 1.